The sequence spans 262 residues: Hydroxyethylthiazole kinase (262 aa).

Met50 serves as a coordination point for substrate. Positions 125 and 171 each coordinate ATP. Residue Gly198 participates in substrate binding.

It belongs to the Thz kinase family. It depends on Mg(2+) as a cofactor.

It catalyses the reaction 5-(2-hydroxyethyl)-4-methylthiazole + ATP = 4-methyl-5-(2-phosphooxyethyl)-thiazole + ADP + H(+). It functions in the pathway cofactor biosynthesis; thiamine diphosphate biosynthesis; 4-methyl-5-(2-phosphoethyl)-thiazole from 5-(2-hydroxyethyl)-4-methylthiazole: step 1/1. Catalyzes the phosphorylation of the hydroxyl group of 4-methyl-5-beta-hydroxyethylthiazole (THZ). The polypeptide is Hydroxyethylthiazole kinase (Escherichia coli O6:K15:H31 (strain 536 / UPEC)).